The sequence spans 332 residues: MLAEKLQINSITPHPSVEYWSVCKVEALFETPFLELVYRAAQIHRKHFNSRTIQLSTLMSIKTGGCPEDCGYCPQSARYHTGVQNQQLLDVNEIIAKAKIAKARGAGRFCMGAAWRGPKPKDIEKVTEIIKAVKSLGLETCGTFGLLQDGMAEDLKEAGLDYYNHNLDTAPEHYAEVIGTRRFDDRLSTLGKVRKAGLKVCCGGIVGMNETRKERAGLIASLANLDPQPESVPINQLVKVEGTPLADAEELDWTEFVRTIAVARITMPKSYVRLSAGRSGMTEEMQAMCFMAGANSIFYGDKLLVTDNPEEDGDQLLMAKLDLEPETAENKK.

The region spanning 51–278 is the Radical SAM core domain; the sequence is RTIQLSTLMS…KSYVRLSAGR (228 aa). [4Fe-4S] cluster is bound by residues cysteine 66, cysteine 70, and cysteine 73. Cysteine 110, cysteine 141, cysteine 201, and arginine 273 together coordinate [2Fe-2S] cluster.

The protein belongs to the radical SAM superfamily. Biotin synthase family. In terms of assembly, homodimer. [4Fe-4S] cluster serves as cofactor. It depends on [2Fe-2S] cluster as a cofactor.

It catalyses the reaction (4R,5S)-dethiobiotin + (sulfur carrier)-SH + 2 reduced [2Fe-2S]-[ferredoxin] + 2 S-adenosyl-L-methionine = (sulfur carrier)-H + biotin + 2 5'-deoxyadenosine + 2 L-methionine + 2 oxidized [2Fe-2S]-[ferredoxin]. The protein operates within cofactor biosynthesis; biotin biosynthesis; biotin from 7,8-diaminononanoate: step 2/2. In terms of biological role, catalyzes the conversion of dethiobiotin (DTB) to biotin by the insertion of a sulfur atom into dethiobiotin via a radical-based mechanism. The polypeptide is Biotin synthase (Haemophilus influenzae (strain PittGG)).